We begin with the raw amino-acid sequence, 173 residues long: Ribosome maturation factor RimM (173 aa).

One can recognise a PRC barrel domain in the interval 92 to 165 (EGEFYHADLI…RVVIEAPAEI (74 aa)).

The protein belongs to the RimM family. In terms of assembly, binds ribosomal protein uS19.

The protein localises to the cytoplasm. Functionally, an accessory protein needed during the final step in the assembly of 30S ribosomal subunit, possibly for assembly of the head region. Essential for efficient processing of 16S rRNA. May be needed both before and after RbfA during the maturation of 16S rRNA. It has affinity for free ribosomal 30S subunits but not for 70S ribosomes. This chain is Ribosome maturation factor RimM, found in Nitrobacter winogradskyi (strain ATCC 25391 / DSM 10237 / CIP 104748 / NCIMB 11846 / Nb-255).